Here is a 547-residue protein sequence, read N- to C-terminus: Rho GTPase-activating protein 36 (547 aa).

A signal peptide spans 1–40 (MGGCNPFLKAARTLCPRIMPPLLFLSAFIFLVNVLGGAPG). Residues 226 to 426 (MSLNPIAKQI…AMIDNWDILF (201 aa)) enclose the Rho-GAP domain. The disordered stretch occupies residues 493–547 (FDEGSSEEPAVPPGTAHSHDDEEGAGNPPIPEQDRPLLRVPREKQAKTGIGYFFP). Basic and acidic residues predominate over residues 524–538 (EQDRPLLRVPREKQA).

Functionally, GTPase activator for the Rho-type GTPases by converting them to an inactive GDP-bound state. The chain is Rho GTPase-activating protein 36 (ARHGAP36) from Ailuropoda melanoleuca (Giant panda).